The sequence spans 1880 residues: Nonribosomal peptide synthetase otaB (1880 aa).

The tract at residues 205 to 594 (AQAVERGNSI…SVSFVGRRQA (390 aa)) is adenylation 1. One can recognise a Carrier domain in the interval 728-804 (LPLSPLERQI…ELGAHLEQEA (77 aa)). The residue at position 765 (Ser-765) is an O-(pantetheine 4'-phosphoryl)serine. The segment at 840–1250 (EDVYPCTALQ…LLSPQDQQQL (411 aa)) is condensation. The segment at 1269–1665 (QRQCLAHPQK…GRKDRQVKLR (397 aa)) is adenylation 2.

It belongs to the NRP synthetase family.

It catalyses the reaction 7-carboxymellein + L-phenylalanine + ATP = ochratoxin B + ADP + phosphate + H(+). Its pathway is mycotoxin biosynthesis. In terms of biological role, nonribosomal peptide synthetase; part of the gene cluster that mediates the biosynthesis of ochratoxin A (OTA), a mycotoxin composed of a chlorinated type I polyketide dihydroisocoumarin moiety linked to L-phenylalanine, and demonstrated to have nephrotoxic, immunotoxic, genotoxic, neurotoxic, and teratogenic properties. OtaB is responsible for the linking of phenylalanine to the dihydroisocoumarin ring. The pathway begins with the highly reducing polyketide synthase otaA that catalyzes the formation of the isocoumarin group during the initial stages of biosynthesis, starting from one acetate and 4 malonate units, to originate the characteristic pentaketide skeleton 7-methylmellein (7-MM) of the OTA molecule. The newly identified cyclase otaY might be involved in the polyketide cyclization reaction during the initial steps of the OTA biosynthesis. 7-MM is then oxidized into 7-carboxymellein (also called ochratoxin beta) by the cytochrome P450 monooxygenase otaC. The NRPS encoded by the otaB gene is involved in the linking of phenylalanine to the dihydroisocoumarin ring. The reaction catalyzed by NRPS results in the production of ochratoxin B (OTB), which is the non-chlorinated analog of OTA and which subsequently serves as the substrate of the halogenase otaD for chlorination activity to form the final molecular structure of OTA, containing a chlorine atom in the C-5 position of the molecule. The polypeptide is Nonribosomal peptide synthetase otaB (Aspergillus niger (strain ATCC MYA-4892 / CBS 513.88 / FGSC A1513)).